Reading from the N-terminus, the 238-residue chain is LexA repressor (238 aa).

A DNA-binding region (H-T-H motif) is located at residues 26–46 (FDEMKDALDLASKSGIHRLIT). Active-site for autocatalytic cleavage activity residues include Ser-158 and Lys-196.

It belongs to the peptidase S24 family. In terms of assembly, homodimer.

It carries out the reaction Hydrolysis of Ala-|-Gly bond in repressor LexA.. Functionally, represses a number of genes involved in the response to DNA damage (SOS response), including recA and lexA. In the presence of single-stranded DNA, RecA interacts with LexA causing an autocatalytic cleavage which disrupts the DNA-binding part of LexA, leading to derepression of the SOS regulon and eventually DNA repair. The chain is LexA repressor from Rhizobium meliloti (strain 1021) (Ensifer meliloti).